The chain runs to 313 residues: Proline-rich protein 3 (313 aa).

The first 22 residues, 1–22 (MAITRSSLAICLILSLVTITTA), serve as a signal peptide directing secretion. A 35 X 5 AA approximate repeats region spans residues 27-312 (PSSPPVYKSP…GPKAAPATPK (286 aa)). 35 consecutive repeat copies span residues 30–34 (PPVYK), 35–39 (SPEHK), 40–43 (PTLP), 44–48 (SPVYT), 49–53 (PPVYK), 54–57 (PTLS), 58–62 (PPVYT), 64–67 (PTIP), 68–72 (PPVYT), 73–77 (PPVYK), 82–86 (PPVYT), 87–91 (KPTIP), 92–96 (PPVYT), 97–101 (PPVYK), 102–105 (PTLS), 106–110 (PPVYT), 111–115 (KPTIP), 116–120 (PPVYT), 121–125 (PPVYK), 126–131 (PTPVYT), 132–136 (KPTIP), 137–141 (PPVYT), 142–146 (PPVYK), 147–150 (PTPS), 151–155 (PPVYK), 157–163 (SPSYSSP), 164–168 (PPPYV), 169–174 (PKPTYT), 175–181 (PTTKPYV), 182–186 (PEILK), 187–229 (AVDG…VIYS), 258–262 (SPVET), 266–270 (PTNVN), 298–302 (PFYYT), and 308–312 (PATPK).

Belongs to the plant proline-rich protein superfamily. ENOD12 family. In terms of tissue distribution, exclusively expressed in roots, particularly in root hairs-containing regions, and especially in root hairs.

Its subcellular location is the secreted. It localises to the cell wall. May contribute to cell wall structure in root hairs. The sequence is that of Proline-rich protein 3 (PRP3) from Arabidopsis thaliana (Mouse-ear cress).